Reading from the N-terminus, the 651-residue chain is Maternal embryonic leucine zipper kinase (651 aa).

The region spanning 13–265 (YELHETVGTG…VKHLLNHPWL (253 aa)) is the Protein kinase domain. Residues 19 to 27 (VGTGGFAKV) and Lys42 contribute to the ATP site. Asp134 serves as the catalytic Proton acceptor. The residue at position 169 (Thr169) is a Phosphothreonine; by autocatalysis. Ser173 bears the Phosphoserine; by autocatalysis mark. The tract at residues 284–323 (IDEDCVTELSVFYKYSRTSTTRLISEWSYDHITASYLLLH) is UBA-like. The tract at residues 328–651 (HGKAVRLKHP…VEDILSSCKV (324 aa)) is autoinhibitory region. The tract at residues 410 to 490 (SAPATPVVQR…TPTKKPIGTG (81 aa)) is disordered. Phosphothreonine is present on Thr414. Residues 423–441 (HKNEDKENSNTAVARDENV) show a composition bias toward basic and acidic residues. 4 positions are modified to phosphothreonine: Thr449, Thr451, Thr481, and Thr483. Residues 471–483 (QTKEKNQSKETPT) show a composition bias toward basic and acidic residues. Residues Ser498, Ser505, and Ser517 each carry the phosphoserine modification. The KA1 domain maps to 602–651 (SDFGKVTMQFELEVCQLSKSEVVGIRRQRLKGDAWVYKRLVEDILSSCKV).

Belongs to the protein kinase superfamily. CAMK Ser/Thr protein kinase family. SNF1 subfamily. Post-translationally, autophosphorylated: autophosphorylation of the T-loop at Thr-169 and Ser-173 is required for activation. Phosphorylated by the maturation promoting factor (MPF), composed of cdk1 and a cyclin-B. Also phosphorylated by some MAPK. Phosphorylated during oocyte maturation. Dephosphorylation destabilizes the protein. There is some ambiguity for some phosphosites: Thr-481/Thr-483 and Ser-505/Ser-517. Degraded when cells exit mitosis.

It is found in the cell membrane. It catalyses the reaction L-seryl-[protein] + ATP = O-phospho-L-seryl-[protein] + ADP + H(+). The enzyme catalyses L-threonyl-[protein] + ATP = O-phospho-L-threonyl-[protein] + ADP + H(+). Its activity is regulated as follows. Activated by autophosphorylation of the T-loop at Thr-169 and Ser-173: in contrast to other members of the SNF1 subfamily, phosphorylation at Thr-169 is not mediated by STK11/LKB1 but via autophosphorylation instead. Functionally, serine/threonine-protein kinase involved in various processes such as cell cycle regulation, self-renewal of stem cells, apoptosis and splicing regulation. Also plays a role in primitive hematopoiesis, possibly by affecting the expression of genes critical for hematopoiesis. Plays a role in cytokinesis during early development. This chain is Maternal embryonic leucine zipper kinase (melk), found in Xenopus laevis (African clawed frog).